We begin with the raw amino-acid sequence, 166 residues long: Gem-associated protein 6 (166 aa).

Positions 4-73 (WMKKSPLEWE…VQTVETISEG (70 aa)) constitute a Sm domain. The 99-residue stretch at 68–166 (ETISEGDHRV…LIQGHLSASQ (99 aa)) folds into the AD domain. Phosphoserine is present on residues Ser-94 and Ser-165.

As to quaternary structure, part of the core SMN complex that contains SMN1, GEMIN2/SIP1, DDX20/GEMIN3, GEMIN4, GEMIN5, GEMIN6, GEMIN7, GEMIN8 and STRAP/UNRIP. Part of the SMN-Sm complex that contains SMN1, GEMIN2/SIP1, DDX20/GEMIN3, GEMIN4, GEMIN5, GEMIN6, GEMIN7, GEMIN8, STRAP/UNRIP and the Sm proteins SNRPB, SNRPD1, SNRPD2, SNRPD3, SNRPE, SNRPF and SNRPG. Interacts with GEMIN7; the interaction is direct. Interacts with GEMIN8; the interaction is direct. Interacts with SNRPB, SNRPD2, SNRPD3 and SNRPE; the interaction is direct.

Its subcellular location is the nucleus. The protein resides in the nucleoplasm. The protein localises to the gem. It localises to the cytoplasm. Functionally, the SMN complex catalyzes the assembly of small nuclear ribonucleoproteins (snRNPs), the building blocks of the spliceosome, and thereby plays an important role in the splicing of cellular pre-mRNAs. Most spliceosomal snRNPs contain a common set of Sm proteins SNRPB, SNRPD1, SNRPD2, SNRPD3, SNRPE, SNRPF and SNRPG that assemble in a heptameric protein ring on the Sm site of the small nuclear RNA to form the core snRNP (Sm core). In the cytosol, the Sm proteins SNRPD1, SNRPD2, SNRPE, SNRPF and SNRPG are trapped in an inactive 6S pICln-Sm complex by the chaperone CLNS1A that controls the assembly of the core snRNP. To assemble core snRNPs, the SMN complex accepts the trapped 5Sm proteins from CLNS1A forming an intermediate. Binding of snRNA inside 5Sm triggers eviction of the SMN complex, thereby allowing binding of SNRPD3 and SNRPB to complete assembly of the core snRNP. This chain is Gem-associated protein 6 (Gemin6), found in Mus musculus (Mouse).